Here is a 547-residue protein sequence, read N- to C-terminus: uncharacterized protein (547 aa).

Residues 1–21 lie on the Extracellular side of the membrane; it reads MVKKHQNSKMGNTNHFGHLKS. A helical transmembrane segment spans residues 22–42; the sequence is FVGGNVVALGAGTPYLFSFYA. The Cytoplasmic segment spans residues 43–58; sequence PQLLSKCHIPVSASSK. A helical transmembrane segment spans residues 59–79; the sequence is LSFSLTIGSSLMGILAGIVVD. At 80–83 the chain is on the extracellular side; it reads RSPK. Residues 84 to 104 traverse the membrane as a helical segment; the sequence is LSCLIGSMCVFIAYLILNLCY. The Cytoplasmic portion of the chain corresponds to 105-110; the sequence is KHEWSS. A helical transmembrane segment spans residues 111 to 131; it reads TFLISLSLVLIGYGSVSGFYA. At 132 to 144 the chain is on the extracellular side; the sequence is SVKCANTNFPQHR. Residues 145 to 165 form a helical membrane-spanning segment; it reads GTAGAFPVSLYGLSGMVFSYL. Over 166 to 175 the chain is Cytoplasmic; that stretch reads CSKLFGENIE. The chain crosses the membrane as a helical span at residues 176–196; that stretch reads HVFIFLMVACGCMILVGYFSL. The Extracellular portion of the chain corresponds to 197–323; that stretch reads DIFSNAEGDD…LKSSTFIGYY (127 aa). S237 carries the phosphoserine modification. The tract at residues 275-300 is disordered; the sequence is LLSPSSPHTKYDFEDENTSKNTVGEN. The helical transmembrane segment at 324-344 threads the bilayer; it reads IVLGILQGVGLMYIYSVGFMV. Over 345–398 the chain is Cytoplasmic; that stretch reads QAQVSTPPLNQLPINAEKIQSLQVTLLSLLSFCGRLSSGPISDFLVKKFKAQRL. A helical membrane pass occupies residues 399 to 419; sequence WNIVIASLLVFLASNKISHDF. The Extracellular segment spans residues 420-437; it reads SSIEDPSLRASKSFKNIS. A helical membrane pass occupies residues 438-458; sequence VCSAIFGYSFGVLFGTFPSIV. The Cytoplasmic portion of the chain corresponds to 459-469; sequence ADRFGTNGYST. A helical transmembrane segment spans residues 470-490; that stretch reads LWGVLTTGGVFSVSVFTDILG. Residues 491-514 lie on the Extracellular side of the membrane; that stretch reads RDFKANTGDDDGNCKKGVLCYSYT. Residues 515-535 form a helical membrane-spanning segment; that stretch reads FMVTKYCAAFNLLFVLGIIGY. Topologically, residues 536–547 are cytoplasmic; it reads TYYRRRATANSL.

It localises to the membrane. This is an uncharacterized protein from Saccharomyces cerevisiae (strain ATCC 204508 / S288c) (Baker's yeast).